We begin with the raw amino-acid sequence, 201 residues long: Recombination protein RecR (201 aa).

The C4-type zinc finger occupies 60-75; the sequence is CSRCFHFTDAEECSIC. Residues 83 to 178 enclose the Toprim domain; the sequence is GEICVVETTA…RVSRIAYGIP (96 aa).

It belongs to the RecR family.

Its function is as follows. May play a role in DNA repair. It seems to be involved in an RecBC-independent recombinational process of DNA repair. It may act with RecF and RecO. The protein is Recombination protein RecR of Syntrophobacter fumaroxidans (strain DSM 10017 / MPOB).